The sequence spans 570 residues: Phosphoglucomutase 1 (570 aa).

At S2 the chain carries N-acetylserine. Alpha-D-glucose 1,6-bisphosphate-binding residues include R24 and S120. S120 (phosphoserine intermediate) is an active-site residue. Residues S120, D291, D293, and D295 each contribute to the Mg(2+) site. Position 120 is a phosphoserine (S120). Positions 295, 296, 360, 379, 381, and 392 each coordinate alpha-D-glucose 1,6-bisphosphate.

It belongs to the phosphohexose mutase family. In terms of assembly, monomer. Mg(2+) is required as a cofactor.

Its subcellular location is the cytoplasm. The enzyme catalyses alpha-D-glucose 1-phosphate = alpha-D-glucose 6-phosphate. It carries out the reaction O-phospho-L-seryl-[protein] + alpha-D-glucose 1-phosphate = alpha-D-glucose 1,6-bisphosphate + L-seryl-[protein]. The catalysed reaction is alpha-D-glucose 1,6-bisphosphate + L-seryl-[protein] = O-phospho-L-seryl-[protein] + alpha-D-glucose 6-phosphate. Its function is as follows. Minor phosphoglucomutase isozyme that catalyzes the reversible interconversion of alpha-D-glucose 1-phosphate and alpha-D-glucose 6-phosphate. The mechanism proceeds via the intermediate compound alpha-D-glucose 1,6-bisphosphate. Constitutes about 10-20% of the phosphoglucomutase activity in the cell. Key enzyme in hexose metabolism. The forward reaction is an essential step in the energy metabolism of galactose since the product of the galactose pathway enzymes in yeast is glucose 1-phosphate. The reverse reaction is an essential step for biosynthesis when carbon sources other than galactose are the energy source because glucose 1-phosphate is the starting point for the synthesis of UDP-glucose, which acts as a precursor for the synthesis of oligosaccharides and trehalose. The chain is Phosphoglucomutase 1 from Saccharomyces cerevisiae (strain ATCC 204508 / S288c) (Baker's yeast).